The primary structure comprises 473 residues: Putative protein TIC 214 C-terminal part (473 aa).

It belongs to the TIC214 family. In terms of assembly, part of the Tic complex.

It localises to the plastid. The protein localises to the chloroplast. Functionally, involved in protein precursor import into chloroplasts. May be part of an intermediate translocation complex acting as a protein-conducting channel at the inner envelope. The sequence is that of Putative protein TIC 214 C-terminal part from Anthoceros angustus (Hornwort).